A 365-amino-acid polypeptide reads, in one-letter code: Aminomethyltransferase (365 aa).

Belongs to the GcvT family. In terms of assembly, the glycine cleavage system is composed of four proteins: P, T, L and H.

It catalyses the reaction N(6)-[(R)-S(8)-aminomethyldihydrolipoyl]-L-lysyl-[protein] + (6S)-5,6,7,8-tetrahydrofolate = N(6)-[(R)-dihydrolipoyl]-L-lysyl-[protein] + (6R)-5,10-methylene-5,6,7,8-tetrahydrofolate + NH4(+). In terms of biological role, the glycine cleavage system catalyzes the degradation of glycine. This chain is Aminomethyltransferase, found in Chlorobium luteolum (strain DSM 273 / BCRC 81028 / 2530) (Pelodictyon luteolum).